The following is a 448-amino-acid chain: Cysteine--tRNA ligase (448 aa).

Cysteine 29 is a Zn(2+) binding site. The 'HIGH' region signature appears at proline 31–asparagine 41. Residues cysteine 212, histidine 237, and glutamate 241 each contribute to the Zn(2+) site. A 'KMSKS' region motif is present at residues lysine 269–serine 273. Residue lysine 272 participates in ATP binding.

Belongs to the class-I aminoacyl-tRNA synthetase family. Monomer. Zn(2+) is required as a cofactor.

The protein localises to the cytoplasm. The catalysed reaction is tRNA(Cys) + L-cysteine + ATP = L-cysteinyl-tRNA(Cys) + AMP + diphosphate. The chain is Cysteine--tRNA ligase from Streptococcus equi subsp. zooepidemicus (strain MGCS10565).